Consider the following 1116-residue polypeptide: MNQLTVSYGLISPDYCTSQDAHILPITKILYPDIPGKNYFLTSGRDGSIILHKNTQLSNEPETAATTIKNDAIRMQVHSDWASDLIHVNMKNSDPSAGDTFISVSHDFSIVLISVNAQLTTWDKKIIGDHDDYIKCIVPIHYEMSNDYELEEQEGGPDNVHDGINNGIVVDEQNNFLFVTGGLDRKIKLWCLSSGPEKMATLLHTFDNAQSNDTGSIYSMSPIIPKYSFDDNQTSRPFDFVAGDCNGDLIFYSCKYRKEVIRIQNAHRTNIKVVRTLDDSTRLISTSSDGVINVWDLNCRHDQTTGALQLPKKIGSWSWDSSIWCVQGTSLDKLYFGDSQGNVMRANLSSYEDAKLTRIFKPDHHHHHHHHHEHEEQNISTTDAKVKKYGGILDIALLPNEKLLFSFCTDSNLNVLDLTNNHFSVNEGGFALTRSSLLTNRRHVITENTKGQMQRWDIVSCELLNTFDSSEGSFDDIVMKYTSKEILSHWCTVSVKVGMLFVKINPKFLKTEVYGSALKDYQVVNNIEINSDERYNLGKIVINSLFNEFISYEVQKDKLLRKKIFSLKKKDLTNSLTLDTGYNSESKKNNKDKKRKSTFKISSTLSIGNTNSSGTPPNSAPATPVMAETIVLEEQPLLQSASDKAIDDSLELVQPLPASKKPYFRTQSSGSLLSRKFKSFRSTSGRATTGLNTPEEPKGILPDTPHVINDDSAFPQAINTTQQSKDATPESMLWNHPFKLEQKLSAISSQDLPSNNTHNKLRSSENSRANSTSTLEGNEKKKPEFMPDLLEQIQESYKQQYMNTSSLKYLTKRLPVTKIIKASSCPIIRVKSATLVLVHLWKEGSCGGRVLFSTLLPPSHVDNETVSGGKENSKPPDDEEVDLQAVDDDKLGKYDLIDGELGSRLNRRQIFEQLEENLPYWFAKALFRDIKTVEEQPKLNFLIMPWSSVGGSEAAGNENKKKFISASDTTESSGNDSSDSSLGNGNEAVSPSTQQQFHNMLKFGRPKTSEQELNPTDLPRISEANVKLVAPGMIRVKKIKLYVADRFETKTPEMKAKMEPSLWLDLLCRGQVLDNDMTLNTVRTLYWKSQGDIVLEYRRKVHNSPLVHEVNGNEGK.

7 WD repeats span residues 21 to 62 (AHIL…NEPE), 91 to 132 (KNSD…DHDD), 160 to 200 (VHDG…EKMA), 219 to 262 (SMSP…EVIR), 266 to 305 (AHRTNIKVVRTLDDSTRLISTSSDGVINVWDLNCRHDQTT), 387 to 426 (KKYGGILDIALLPNEKLLFSFCTDSNLNVLDLTNNHFSVN), and 428 to 466 (GGFALTRSSLLTNRRHVITENTKGQMQRWDIVSCELLNT). A disordered region spans residues 578-600 (LDTGYNSESKKNNKDKKRKSTFK). A Phosphoserine modification is found at serine 668. Phosphothreonine is present on threonine 693. Residues 747 to 776 (ISSQDLPSNNTHNKLRSSENSRANSTSTLE) show a composition bias toward polar residues. Disordered stretches follow at residues 747–784 (ISSQDLPSNNTHNKLRSSENSRANSTSTLEGNEKKKPE) and 963–994 (FISASDTTESSGNDSSDSSLGNGNEAVSPSTQ). Residues 967-987 (SDTTESSGNDSSDSSLGNGNE) show a composition bias toward low complexity.

In terms of assembly, interacts (via its WD repeats) with ubiquitin.

The protein resides in the cytoplasm. Its function is as follows. Ubiquitin-binding protein involved in the resistance to phenanthroline, sanguinarine, nordihydroguaiaretic acid (NDGA), isopropyl (N-3-chloro-phenyl)-carbamate (IPCPC) and guanosine 5'-O-(2-thiodiphosphate). The sequence is that of DUB-associated factor 1 from Saccharomyces cerevisiae (strain ATCC 204508 / S288c) (Baker's yeast).